Consider the following 398-residue polypeptide: MKKITVLGSTGSIGISTLSIVKNNPSLFKVIVLVANKNSSMMLEQCEYFSPDWAIMKNKKSAHILKKRLKDKKIKTQVLSGNKAICQLAALKESDLVISAIVGMAGLLPTLSAINAGKTILLANKESLIVCGIIFMKALSSNKAKIFPIDSEHNAIFQVLPKFVQKNLGKVNLKKNGVKSIILTASGGPFYNFKRENLSFVTPLEACSHPNWSMGRKISIDSATMINKGFEYAEARLLFNASSSEIDILIHPQSIIHSMVEYIDGTILAQLSVPDMKVAISYAMSWPNRISSGAKFLNFNKLSNLSFFKPDFIQFPCLKLAIDAFSQGQAAMTVLNAVNEVTVSAFLDSKISFNKISEINTDILMSSSFSEPVSVEEVLEIDKKTRIKSQKKISSLIF.

7 residues coordinate NADPH: Thr10, Gly11, Ser12, Ile13, Lys37, Asn38, and Asn124. Lys125 is a binding site for 1-deoxy-D-xylulose 5-phosphate. Glu126 contacts NADPH. Asp150 is a Mn(2+) binding site. 1-deoxy-D-xylulose 5-phosphate-binding residues include Ser151, Glu152, Ser186, and His209. Glu152 is a binding site for Mn(2+). Position 215 (Gly215) interacts with NADPH. 1-deoxy-D-xylulose 5-phosphate contacts are provided by Ser222, Asn227, Lys228, and Glu231. Glu231 provides a ligand contact to Mn(2+).

The protein belongs to the DXR family. Homodimer. Mg(2+) serves as cofactor. The cofactor is Mn(2+).

The catalysed reaction is 2-C-methyl-D-erythritol 4-phosphate + NADP(+) = 1-deoxy-D-xylulose 5-phosphate + NADPH + H(+). It functions in the pathway isoprenoid biosynthesis; isopentenyl diphosphate biosynthesis via DXP pathway; isopentenyl diphosphate from 1-deoxy-D-xylulose 5-phosphate: step 1/6. Catalyzes the NADPH-dependent rearrangement and reduction of 1-deoxy-D-xylulose-5-phosphate (DXP) to 2-C-methyl-D-erythritol 4-phosphate (MEP). In Buchnera aphidicola subsp. Schizaphis graminum (strain Sg), this protein is 1-deoxy-D-xylulose 5-phosphate reductoisomerase.